Reading from the N-terminus, the 445-residue chain is NAD-specific glutamate dehydrogenase (445 aa).

Residue K124 is part of the active site.

The protein belongs to the Glu/Leu/Phe/Val dehydrogenases family. As to quaternary structure, homohexamer.

The protein resides in the cell surface. It carries out the reaction L-glutamate + NAD(+) + H2O = 2-oxoglutarate + NH4(+) + NADH + H(+). Probably involved in degradation rather than biosynthesis of glutamate. The chain is NAD-specific glutamate dehydrogenase (gdh) from Porphyromonas gingivalis (strain ATCC 33277 / DSM 20709 / CIP 103683 / JCM 12257 / NCTC 11834 / 2561).